The sequence spans 103 residues: Large ribosomal subunit protein bL21 (103 aa).

It belongs to the bacterial ribosomal protein bL21 family. Part of the 50S ribosomal subunit. Contacts protein L20.

This protein binds to 23S rRNA in the presence of protein L20. In Kineococcus radiotolerans (strain ATCC BAA-149 / DSM 14245 / SRS30216), this protein is Large ribosomal subunit protein bL21.